A 149-amino-acid chain; its full sequence is Protein GR6 (149 aa).

Expressed in fetus (aged from 7 to 8 weeks). Weakly expressed in lymphocytes.

The chain is Protein GR6 from Homo sapiens (Human).